We begin with the raw amino-acid sequence, 469 residues long: NADH-quinone oxidoreductase subunit N (469 aa).

14 helical membrane-spanning segments follow: residues 6–26, 37–57, 61–81, 96–116, 121–141, 156–176, 197–217, 234–254, 263–283, 291–311, 315–335, 362–382, 397–419, and 441–461; these read IWII…LLLG, VGVA…PAAL, LGVA…LTAA, ISGE…AVVS, LLIL…LVAI, LLLG…LYAA, PIAL…ISLV, VVAF…LLLL, LHTP…LAAL, MLAY…LTGS, FAAV…AFGA, AGIL…AGFI, IPLA…RVVV, and IALS…SPLL.

The protein belongs to the complex I subunit 2 family. As to quaternary structure, NDH-1 is composed of 14 different subunits. Subunits NuoA, H, J, K, L, M, N constitute the membrane sector of the complex.

The protein localises to the cell inner membrane. It catalyses the reaction a quinone + NADH + 5 H(+)(in) = a quinol + NAD(+) + 4 H(+)(out). In terms of biological role, NDH-1 shuttles electrons from NADH, via FMN and iron-sulfur (Fe-S) centers, to quinones in the respiratory chain. The immediate electron acceptor for the enzyme in this species is believed to be ubiquinone. Couples the redox reaction to proton translocation (for every two electrons transferred, four hydrogen ions are translocated across the cytoplasmic membrane), and thus conserves the redox energy in a proton gradient. This Geotalea uraniireducens (strain Rf4) (Geobacter uraniireducens) protein is NADH-quinone oxidoreductase subunit N.